The primary structure comprises 113 residues: 4-cresol dehydrogenase [hydroxylating] cytochrome c subunit (113 aa).

A signal peptide spans 1 to 33 (MTFPFSGAAVKRMLVTGVVLPFGLLVAAGQAQA). C48, C51, H52, and M83 together coordinate heme c.

As to quaternary structure, tetramer of two cytochrome subunits and two flavoprotein subunits. In terms of processing, binds 1 heme c group covalently per subunit.

Its pathway is aromatic compound metabolism; p-cresol degradation. Functionally, this is the heme-containing component of the p-cresol methylhydroxylase. It accepts electrons from the flavoprotein subunit. In Pseudomonas putida (Arthrobacter siderocapsulatus), this protein is 4-cresol dehydrogenase [hydroxylating] cytochrome c subunit (pchC).